A 265-amino-acid polypeptide reads, in one-letter code: Large ribosomal subunit protein bL9m (265 aa).

The transit peptide at 1–49 directs the protein to the mitochondrion; that stretch reads MAASVAPGVRTLWWAGAAWLRQGGIRELFRPRIEGSTPGRDFSLSHYQS.

It belongs to the bacterial ribosomal protein bL9 family. As to quaternary structure, component of the mitochondrial ribosome large subunit (39S) which comprises a 16S rRNA and about 50 distinct proteins.

Its subcellular location is the mitochondrion. The sequence is that of Large ribosomal subunit protein bL9m (Mrpl9) from Mus musculus (Mouse).